The sequence spans 401 residues: Mu-type opioid receptor (401 aa).

The Extracellular portion of the chain corresponds to 1–69 (MDSSADPRNA…CPPTGSPSMV (69 aa)). N-linked (GlcNAc...) asparagine glycans are attached at residues asparagine 9, asparagine 12, asparagine 34, asparagine 41, and asparagine 49. A helical transmembrane segment spans residues 70 to 94 (TAITIMALYSIVCVVGLFGNFLVMY). Residues 95-107 (VIVRYTKMKTATN) lie on the Cytoplasmic side of the membrane. Residues 108 to 132 (IYIFNLALADALATSTLPFQSVNYL) traverse the membrane as a helical segment. Residues 133–143 (MGTWPFGTILC) lie on the Extracellular side of the membrane. A disulfide bridge connects residues cysteine 143 and cysteine 220. A helical membrane pass occupies residues 144–166 (KIVISIDYYNMFTSIFTLCTMSV). The Cytoplasmic portion of the chain corresponds to 167–186 (DRYIAVCHPVKALDFRTPRN). A Phosphotyrosine modification is found at tyrosine 169. Residues 187 to 208 (AKIINVCNWILSSAIGLPVMFM) traverse the membrane as a helical segment. Over 209–231 (ATTKYRNGSIDCALTFSHPTWYW) the chain is Extracellular. The chain crosses the membrane as a helical span at residues 232-256 (ENLLKICVFIFAFIMPVLIITVCYG). At 257–280 (LMILRLKSVRMLSGSKEKDRNLRR) the chain is on the cytoplasmic side. The chain crosses the membrane as a helical span at residues 281 to 307 (ITRMVLVVVAVFIVCWTPIHIYVIIKA). Over 308-315 (LITIPETT) the chain is Extracellular. Residues 316 to 339 (FQTVSWHFCIALGYTNSCLNPVLY) form a helical membrane-spanning segment. The short motif at 335 to 339 (NPVLY) is the NPxxY; plays a role in stabilizing the activated conformation of the receptor element. Residues 340–401 (AFLDENFKRC…NLEAETAPLP (62 aa)) lie on the Cytoplasmic side of the membrane. Residue cysteine 354 is the site of S-palmitoyl cysteine attachment. Positions 365 to 385 (NSARIRQNTRDHPSTANTVDR) are disordered. Serine 366 is subject to Phosphoserine. Threonine 373 is subject to Phosphothreonine. Residue serine 378 is modified to Phosphoserine. Position 397 is a phosphothreonine (threonine 397).

It belongs to the G-protein coupled receptor 1 family. In terms of assembly, forms homooligomers and heterooligomers with other GPCRs, such as OPRD1, OPRK1, OPRL1, NPFFR2, ADRA2A, SSTR2, CNR1 and CCR5 (probably in dimeric forms). Interacts with heterotrimeric G proteins; interaction with a heterotrimeric complex containing GNAI1, GNB1 and GNG2 stabilizes the active conformation of the receptor and increases its affinity for endomorphin-2, the synthetic opioid peptide DAMGO and for morphinan agonists. Interacts with PPL; the interaction disrupts agonist-mediated G-protein activation. Interacts (via C-terminus) with DNAJB4 (via C-terminus). Interacts with calmodulin; the interaction inhibits the constitutive activity of OPRM1; it abolishes basal and attenuates agonist-stimulated G-protein coupling. Interacts with FLNA, PLD2, RANBP9 and WLS and GPM6A. Interacts with RTP4. Interacts with SYP and GNAS. Interacts with RGS9, RGS17, RGS20, RGS4, PPP1R9B and HINT1. Post-translationally, phosphorylated. Differentially phosphorylated in basal and agonist-induced conditions. Agonist-mediated phosphorylation modulates receptor internalization. Phosphorylated by GRK2 in a agonist-dependent manner. Phosphorylation at Tyr-169 requires receptor activation, is dependent on non-receptor protein tyrosine kinase Src and results in a decrease in agonist efficacy by reducing G-protein coupling efficiency. Phosphorylated on tyrosine residues; the phosphorylation is involved in agonist-induced G-protein-independent receptor down-regulation. Phosphorylation at Ser-378 is involved in G-protein-dependent but not beta-arrestin-dependent activation of the ERK pathway. Ubiquitinated. A basal ubiquitination seems not to be related to degradation. Ubiquitination is increased upon formation of OPRM1:OPRD1 oligomers leading to proteasomal degradation; the ubiquitination is diminished by RTP4.

Its subcellular location is the cell membrane. The protein localises to the cell projection. It is found in the axon. The protein resides in the perikaryon. It localises to the dendrite. Its subcellular location is the endosome. Receptor for endogenous opioids such as beta-endorphin and endomorphin. Receptor for natural and synthetic opioids including morphine, heroin, DAMGO, fentanyl, etorphine, buprenorphin and methadone. Also activated by enkephalin peptides, such as Met-enkephalin or Met-enkephalin-Arg-Phe, with higher affinity for Met-enkephalin-Arg-Phe. Agonist binding to the receptor induces coupling to an inactive GDP-bound heterotrimeric G-protein complex and subsequent exchange of GDP for GTP in the G-protein alpha subunit leading to dissociation of the G-protein complex with the free GTP-bound G-protein alpha and the G-protein beta-gamma dimer activating downstream cellular effectors. The agonist- and cell type-specific activity is predominantly coupled to pertussis toxin-sensitive G(i) and G(o) G alpha proteins, GNAI1, GNAI2, GNAI3 and GNAO1, and to a lesser extent to pertussis toxin-insensitive G alpha proteins GNAZ and GNA15. They mediate an array of downstream cellular responses, including inhibition of adenylate cyclase activity and both N-type and L-type calcium channels, activation of inward rectifying potassium channels, mitogen-activated protein kinase (MAPK), phospholipase C (PLC), phosphoinositide/protein kinase (PKC), phosphoinositide 3-kinase (PI3K) and regulation of NF-kappa-B. Also couples to adenylate cyclase stimulatory G alpha proteins. The selective temporal coupling to G-proteins and subsequent signaling can be regulated by RGSZ proteins, such as RGS9, RGS17 and RGS4. Phosphorylation by members of the GPRK subfamily of Ser/Thr protein kinases and association with beta-arrestins is involved in short-term receptor desensitization. Beta-arrestins associate with the GPRK-phosphorylated receptor and uncouple it from the G-protein thus terminating signal transduction. The phosphorylated receptor is internalized through endocytosis via clathrin-coated pits which involves beta-arrestins. The activation of the ERK pathway occurs either in a G-protein-dependent or a beta-arrestin-dependent manner and is regulated by agonist-specific receptor phosphorylation. Acts as a class A G-protein coupled receptor (GPCR) which dissociates from beta-arrestin at or near the plasma membrane and undergoes rapid recycling. Receptor down-regulation pathways are varying with the agonist and occur dependent or independent of G-protein coupling. Endogenous ligands induce rapid desensitization, endocytosis and recycling. Heterooligomerization with other GPCRs can modulate agonist binding, signaling and trafficking properties. Involved in neurogenesis. This chain is Mu-type opioid receptor (OPRM1), found in Sus scrofa (Pig).